The primary structure comprises 126 residues: Protein ApaG (126 aa).

Residues 2 to 126 (SALDTSIRVE…FRLTTPGLLH (125 aa)) enclose the ApaG domain.

The protein is Protein ApaG of Shewanella baltica (strain OS195).